The primary structure comprises 1322 residues: Serine/threonine-protein kinase TIO (1322 aa).

Positions 6–256 (YHVIELVGEG…WPALREHPFV (251 aa)) constitute a Protein kinase domain. ATP contacts are provided by residues 12 to 20 (VGEGSFGRV) and K35. Residue D127 is the Proton acceptor of the active site. The segment at 1000 to 1322 (CMEDRDLLKA…VIVAKVSGES (323 aa)) is required for the binding to Kinesin-12 members. 6 ARM repeats span residues 1056-1098 (PRLA…DLSR), 1101-1140 (KAFY…NMCR), 1143-1182 (GYFY…NAAY), 1183-1223 (HNDT…NLVR), 1226-1273 (NKLC…LFSL), and 1281-1320 (QICR…KVSG).

The protein belongs to the protein kinase superfamily. Ser/Thr protein kinase family. As to quaternary structure, interacts with Kinesin-12 members KIN12A/PAKRP1 and KIN12B/PAKRP1L. Interacts with KIN7B/NACK2. As to expression, ubiquitous.

The protein resides in the cytoplasm. It is found in the cytoskeleton. The protein localises to the phragmoplast. It carries out the reaction L-seryl-[protein] + ATP = O-phospho-L-seryl-[protein] + ADP + H(+). The catalysed reaction is L-threonyl-[protein] + ATP = O-phospho-L-threonyl-[protein] + ADP + H(+). In terms of biological role, plays a role in conventional modes of cytokinesis in meristems and during male gametogenesis but also acts in nonconventional modes of cytokinesis (cellularization) during female gametogenesis. Constitutes a signaling module in association with Kinesin-12 members that is required to support phragmoplast expansion and cell-plate growth in plant cells. This is Serine/threonine-protein kinase TIO (TIO) from Arabidopsis thaliana (Mouse-ear cress).